The following is a 483-amino-acid chain: Cobyric acid synthase (483 aa).

The GATase cobBQ-type domain occupies 252-430 (ALQVVAVAYP…LHRLFDSGPF (179 aa)). Cys-333 acts as the Nucleophile in catalysis. His-422 is an active-site residue.

This sequence belongs to the CobB/CobQ family. CobQ subfamily.

The protein operates within cofactor biosynthesis; adenosylcobalamin biosynthesis. Functionally, catalyzes amidations at positions B, D, E, and G on adenosylcobyrinic A,C-diamide. NH(2) groups are provided by glutamine, and one molecule of ATP is hydrogenolyzed for each amidation. The sequence is that of Cobyric acid synthase from Halorhodospira halophila (strain DSM 244 / SL1) (Ectothiorhodospira halophila (strain DSM 244 / SL1)).